The sequence spans 120 residues: Large ribosomal subunit protein uL18 (120 aa).

This sequence belongs to the universal ribosomal protein uL18 family. Part of the 50S ribosomal subunit; part of the 5S rRNA/L5/L18/L25 subcomplex. Contacts the 5S and 23S rRNAs.

Functionally, this is one of the proteins that bind and probably mediate the attachment of the 5S RNA into the large ribosomal subunit, where it forms part of the central protuberance. This is Large ribosomal subunit protein uL18 from Brucella suis biovar 1 (strain 1330).